The primary structure comprises 209 residues: HTH-type transcriptional repressor BepR (209 aa).

In terms of domain architecture, HTH tetR-type spans 9–69 (AETREAILLA…SIIGRARFPQ (61 aa)). The segment at residues 32 to 51 (TLTEIACYAGVTRGAIYFHF) is a DNA-binding region (H-T-H motif).

Its function is as follows. Represses expression of bepDE. This is HTH-type transcriptional repressor BepR (bepR) from Brucella suis biovar 1 (strain 1330).